A 163-amino-acid polypeptide reads, in one-letter code: Phosphopantetheine adenylyltransferase (163 aa).

Ser11 contacts substrate. Residues 11-12 (SF) and His19 each bind ATP. Substrate contacts are provided by Lys43, Ala76, and Arg90. Residues 91–93 (GLR), Glu101, and 126–132 (WQALSSS) contribute to the ATP site.

It belongs to the bacterial CoaD family. Homohexamer. Mg(2+) is required as a cofactor.

It is found in the cytoplasm. The enzyme catalyses (R)-4'-phosphopantetheine + ATP + H(+) = 3'-dephospho-CoA + diphosphate. It functions in the pathway cofactor biosynthesis; coenzyme A biosynthesis; CoA from (R)-pantothenate: step 4/5. Its function is as follows. Reversibly transfers an adenylyl group from ATP to 4'-phosphopantetheine, yielding dephospho-CoA (dPCoA) and pyrophosphate. The sequence is that of Phosphopantetheine adenylyltransferase from Streptococcus pyogenes serotype M2 (strain MGAS10270).